The following is a 292-amino-acid chain: Coatomer subunit epsilon (292 aa).

It belongs to the COPE family. In terms of assembly, oligomeric complex that consists of at least the alpha, beta, beta', gamma, delta, epsilon and zeta subunits.

The protein resides in the cytoplasm. Its subcellular location is the golgi apparatus membrane. The protein localises to the cytoplasmic vesicle. It localises to the COPI-coated vesicle membrane. In terms of biological role, the coatomer is a cytosolic protein complex that binds to dilysine motifs and reversibly associates with Golgi non-clathrin-coated vesicles, which further mediate biosynthetic protein transport from the ER, via the Golgi up to the trans Golgi network. The coatomer complex is required for budding from Golgi membranes, and is essential for the retrograde Golgi-to-ER transport of dilysine-tagged proteins. This is Coatomer subunit epsilon (cope-1) from Caenorhabditis elegans.